A 394-amino-acid chain; its full sequence is NAD(P)H-quinone oxidoreductase subunit H (394 aa).

This sequence belongs to the complex I 49 kDa subunit family. NDH-1 can be composed of about 15 different subunits; different subcomplexes with different compositions have been identified which probably have different functions. Post-translationally, the initiator methionine has been seen to be kept and removed.

The protein resides in the cellular thylakoid membrane. It catalyses the reaction a plastoquinone + NADH + (n+1) H(+)(in) = a plastoquinol + NAD(+) + n H(+)(out). The catalysed reaction is a plastoquinone + NADPH + (n+1) H(+)(in) = a plastoquinol + NADP(+) + n H(+)(out). In terms of biological role, NDH-1 shuttles electrons from an unknown electron donor, via FMN and iron-sulfur (Fe-S) centers, to quinones in the respiratory and/or the photosynthetic chain. The immediate electron acceptor for the enzyme in this species is believed to be plastoquinone. Couples the redox reaction to proton translocation, and thus conserves the redox energy in a proton gradient. Cyanobacterial NDH-1 also plays a role in inorganic carbon-concentration. In Synechocystis sp. (strain ATCC 27184 / PCC 6803 / Kazusa), this protein is NAD(P)H-quinone oxidoreductase subunit H (ndhH).